A 514-amino-acid chain; its full sequence is Peptide chain release factor 3 (514 aa).

The tr-type G domain maps to 8–268 (KKRRTFAIIS…TFLEFAPEPH (261 aa)). GTP-binding positions include 17 to 24 (SHPDAGKT), 85 to 89 (DTPGH), and 139 to 142 (NKLD).

It belongs to the TRAFAC class translation factor GTPase superfamily. Classic translation factor GTPase family. PrfC subfamily.

The protein localises to the cytoplasm. In terms of biological role, increases the formation of ribosomal termination complexes and stimulates activities of RF-1 and RF-2. It binds guanine nucleotides and has strong preference for UGA stop codons. It may interact directly with the ribosome. The stimulation of RF-1 and RF-2 is significantly reduced by GTP and GDP, but not by GMP. This is Peptide chain release factor 3 from Streptococcus pyogenes serotype M5 (strain Manfredo).